The sequence spans 1029 residues: Endosome/lysosome-associated apoptosis and autophagy regulator family member 2 (1029 aa).

Residues 1–47 form the signal peptide; sequence MLFRARGPVRGRGWGRPAEAPRRGRSPPWSPAWICCWALAGCQAAWA. At 48–929 the chain is on the extracellular side; it reads GDLPSSSSRP…TCETVDFWLK (882 aa). A glycan (N-linked (GlcNAc...) asparagine) is linked at asparagine 169. Cystine bridges form between cysteine 293-cysteine 310, cysteine 323-cysteine 346, and cysteine 326-cysteine 358. N-linked (GlcNAc...) asparagine glycosylation is found at asparagine 405 and asparagine 691. The MRH domain occupies 672 to 877; the sequence is SDCFFYHEKE…LWESAEACPL (206 aa). 4 cysteine pairs are disulfide-bonded: cysteine 674/cysteine 720, cysteine 730/cysteine 758, cysteine 827/cysteine 863, and cysteine 839/cysteine 875. A helical transmembrane segment spans residues 930-950; it reads VGAGVGAFTAVLLVALTCYFW. At 951–1029 the chain is on the cytoplasmic side; sequence KKNQKLEYKY…QLKTSRSPNI (79 aa). A Phosphoserine modification is found at serine 1018.

Belongs to the ELAPOR family.

It is found in the cell membrane. Functions as a regulator of the BMP signaling pathway and may be involved in epidermal differentiation. This Homo sapiens (Human) protein is Endosome/lysosome-associated apoptosis and autophagy regulator family member 2.